The chain runs to 148 residues: Large ribosomal subunit protein bL27m (148 aa).

The transit peptide at 1 to 30 directs the protein to the mitochondrion; sequence MAAAALTLRTRAAVTALLSPTAPTALAVRH. A disordered region spans residues 28-48; that stretch reads VRHASKKTGGSSKNLGGKSRG.

This sequence belongs to the bacterial ribosomal protein bL27 family. As to quaternary structure, component of the mitochondrial ribosome large subunit (39S) which comprises a 16S rRNA and about 50 distinct proteins.

It is found in the mitochondrion. The polypeptide is Large ribosomal subunit protein bL27m (Mrpl27) (Mus musculus (Mouse)).